The following is a 592-amino-acid chain: Glutathione-regulated potassium-efflux system protein KefB (592 aa).

13 helical membrane-spanning segments follow: residues 4–24 (SDFLLAGVLFLFAAVAAVPLA), 29–49 (IGAVLGYLLAGIAIGPWGLGF), 55–75 (EILHFSELGVVFLMFIIGLEL), 87–107 (IFGVGAAQVLLSAALLAGLLM), 115–135 (AAVVGGIGLAMSSTAMALQLM), 152–172 (VLLFQDLAVIPALALVPLLAG), 177–197 (HFDWMKIGMKVLAFVGMLIGG), 207–227 (FIAASGVREVFTAATLLLVLG), 230–250 (LFMDALGLSMALGTFIAGVLL), 268–288 (GLLLGLFFISVGMSLNLGVLY), 291–311 (LLWVVISVVVLVAVKILVLYL), 324–344 (MQFAGVLSQGGEFAFVLFSTA), and 356–376 (ALLLVTVTLSMMTTPLLMKLV). The RCK N-terminal domain maps to 400-519 (KPQVIVVGFG…AGVTQFSRET (120 aa)).

Belongs to the monovalent cation:proton antiporter 2 (CPA2) transporter (TC 2.A.37) family. KefB subfamily. As to quaternary structure, interacts with the regulatory subunit KefG.

The protein localises to the cell inner membrane. Pore-forming subunit of a potassium efflux system that confers protection against electrophiles. Catalyzes K(+)/H(+) antiport. This Escherichia coli O157:H7 protein is Glutathione-regulated potassium-efflux system protein KefB.